Reading from the N-terminus, the 442-residue chain is UDP-glycosyltransferase 79B8 (442 aa).

UDP-alpha-D-glucose contacts are provided by residues S260, 319–321 (VQQ), 336–344 (HCGPGTIWE), and 358–361 (LGDQ).

This sequence belongs to the UDP-glycosyltransferase family.

This chain is UDP-glycosyltransferase 79B8 (UGT79B8), found in Arabidopsis thaliana (Mouse-ear cress).